Consider the following 207-residue polypeptide: Probable RNA 2'-phosphotransferase (207 aa).

This sequence belongs to the KptA/TPT1 family.

In terms of biological role, removes the 2'-phosphate from RNA via an intermediate in which the phosphate is ADP-ribosylated by NAD followed by a presumed transesterification to release the RNA and generate ADP-ribose 1''-2''-cyclic phosphate (APPR&gt;P). May function as an ADP-ribosylase. This is Probable RNA 2'-phosphotransferase from Methanosarcina barkeri (strain Fusaro / DSM 804).